Reading from the N-terminus, the 59-residue chain is Early growth response protein 1 (59 aa).

C2H2-type zinc fingers lie at residues 1–18 (CDRRFSRSDELTRHIRIH), 24–46 (FQCRICMRNFSRSDHLTTHIRTH), and 52–59 (FACDICGR).

It belongs to the EGR C2H2-type zinc-finger protein family.

It localises to the nucleus. Its subcellular location is the cytoplasm. Transcriptional regulator. Recognizes and binds to the DNA sequence 5'-GCG(T/G)GGGCG-3'(EGR-site) in the promoter region of target genes. Binds double-stranded target DNA, irrespective of the cytosine methylation status. Regulates the transcription of numerous target genes, and thereby plays an important role in regulating the response to growth factors, DNA damage, and ischemia. Plays a role in the regulation of cell survival, proliferation and cell death. Mediates responses to ischemia and hypoxia; regulates the expression of proteins that are involved in inflammatory processes. Plays a role in regulating the expression of circadian clock genes. The protein is Early growth response protein 1 (EGR1) of Serinus canaria (Island canary).